We begin with the raw amino-acid sequence, 316 residues long: Meiotically up-regulated gene 154 protein (316 aa).

The next 4 helical transmembrane spans lie at 41 to 61, 88 to 108, 159 to 179, and 186 to 206; these read YSIP…IYIK, AFLS…FIFS, FLLN…WFYS, and LLTF…SLLL. Positions 291-316 are disordered; it reads HDSGISRDSSSPFKRFPHLSDGSSRF.

The protein localises to the endoplasmic reticulum membrane. Its function is as follows. Has a role in meiosis. This chain is Meiotically up-regulated gene 154 protein (mug154), found in Schizosaccharomyces pombe (strain 972 / ATCC 24843) (Fission yeast).